Reading from the N-terminus, the 290-residue chain is AA9 family lytic polysaccharide monooxygenase A (290 aa).

An N-terminal signal peptide occupies residues 1–17; sequence MKLSLLASVALVPFVSA. 2 residues coordinate Cu(2+): His18 and His101. An intrachain disulfide couples Cys67 to Cys189. Residue His176 coordinates O2. Cu(2+) is bound at residue Tyr187. N-linked (GlcNAc...) asparagine glycans are attached at residues Asn220 and Asn254. A disordered region spans residues 240–290; the sequence is GGSGSGSSSYSKVANVTSSDESSQSGASSSQGTVSTCPNKYNRRHARQFKP. Low complexity predominate over residues 245 to 275; the sequence is GSSSYSKVANVTSSDESSQSGASSSQGTVST. A compositionally biased stretch (basic residues) spans 280–290; the sequence is YNRRHARQFKP.

This sequence belongs to the polysaccharide monooxygenase AA9 family. Cu(2+) serves as cofactor.

It is found in the secreted. The enzyme catalyses [(1-&gt;4)-beta-D-glucosyl]n+m + reduced acceptor + O2 = 4-dehydro-beta-D-glucosyl-[(1-&gt;4)-beta-D-glucosyl]n-1 + [(1-&gt;4)-beta-D-glucosyl]m + acceptor + H2O.. In terms of biological role, lytic polysaccharide monooxygenase (LPMO) that depolymerizes crystalline and amorphous polysaccharides via the oxidation of scissile alpha- or beta-(1-4)-glycosidic bonds, yielding exclusively C1 oxidation products. Catalysis by LPMOs requires the reduction of the active-site copper from Cu(II) to Cu(I) by a reducing agent and H(2)O(2) or O(2) as a cosubstrate. In Aspergillus fumigatus (strain ATCC MYA-4609 / CBS 101355 / FGSC A1100 / Af293) (Neosartorya fumigata), this protein is AA9 family lytic polysaccharide monooxygenase A.